We begin with the raw amino-acid sequence, 224 residues long: Heme response regulator HssR (224 aa).

Residues 3–116 (KCLIVDDDYK…ELLFRIQAVL (114 aa)) enclose the Response regulatory domain. Position 52 is a 4-aspartylphosphate (Asp52). The segment at residues 124 to 222 (QDIIKLGNVT…VRGQGYRVIT (99 aa)) is a DNA-binding region (ompR/PhoB-type).

Phosphorylated by HssS.

The protein resides in the cytoplasm. Member of the two-component regulatory system HssS/HssR involved in intracellular heme homeostasis and tempering of staphylococcal virulence. Phosphorylated HssR binds to a direct repeat sequence within hrtAB promoter and activates the expression of hrtAB, an efflux pump, in response to extracellular heme, hemin, hemoglobin or blood. In Staphylococcus haemolyticus (strain JCSC1435), this protein is Heme response regulator HssR (hssR).